The sequence spans 244 residues: NAD-dependent protein deacylase SIR2rp3 (244 aa).

Residues 1–239 (MRRPNGMIAI…PAWADEVLHG (239 aa)) form the Deacetylase sirtuin-type domain. Position 13–32 (13–32 (GAGISAESGISTFRDQNGLW)) interacts with NAD(+). Substrate contacts are provided by Tyr-57 and Arg-60. 95–98 (QNID) contacts NAD(+). His-113 acts as the Proton acceptor in catalysis. Zn(2+) contacts are provided by Cys-121 and Cys-141. Residues 181 to 183 (GTS) and Ala-225 contribute to the NAD(+) site.

It belongs to the sirtuin family. Class III subfamily. Zn(2+) serves as cofactor.

The protein resides in the mitochondrion. The enzyme catalyses N(6)-malonyl-L-lysyl-[protein] + NAD(+) + H2O = 2''-O-malonyl-ADP-D-ribose + nicotinamide + L-lysyl-[protein]. The catalysed reaction is N(6)-succinyl-L-lysyl-[protein] + NAD(+) + H2O = 2''-O-succinyl-ADP-D-ribose + nicotinamide + L-lysyl-[protein]. It catalyses the reaction N(6)-glutaryl-L-lysyl-[protein] + NAD(+) + H2O = 2''-O-glutaryl-ADP-D-ribose + nicotinamide + L-lysyl-[protein]. Functionally, NAD-dependent lysine demalonylase, desuccinylase and deglutarylase that specifically removes malonyl, succinyl and glutaryl groups on target proteins. Has weak NAD-dependent protein deacetylase activity; however this activity may not be physiologically relevant in vivo. This Trypanosoma brucei brucei (strain 927/4 GUTat10.1) protein is NAD-dependent protein deacylase SIR2rp3 (SIR2rp3).